The following is a 73-amino-acid chain: Conotoxin Cl14.8 (73 aa).

The N-terminal stretch at 1–19 (MKLSVTFIALMLTMTLTQG) is a signal peptide. Positions 20–47 (FVLQAIDGRDNSGLDDLSEADSMEHQLQ) are excised as a propeptide.

This sequence belongs to the conotoxin L superfamily. In terms of processing, contains 2 disulfide bonds. As to expression, expressed by the venom duct.

It is found in the secreted. This Californiconus californicus (California cone) protein is Conotoxin Cl14.8.